Reading from the N-terminus, the 226-residue chain is Protein TRI1 (226 aa).

The region spanning 1-56 is the DEK-C domain; sequence MADINKYIPMVDAILSVSNPDEISPKRVRKALQILYSVNLDSQRKLINELILERFG. The disordered stretch occupies residues 83–118; sequence QKEEERPLRSTRKRKGKSESKSKRKKKKNDSPDSNS. Positions 91 to 110 are enriched in basic residues; it reads RSTRKRKGKSESKSKRKKKK. S113 is subject to Phosphoserine. In terms of domain architecture, SWIB/MDM2 spans 119–195; it reads ISVRKVLLSA…NKLLTKHLFN (77 aa). Residues 200 to 218 show a composition bias toward basic and acidic residues; sequence VKHEEEQKQTPEKEIKLEN. Residues 200–226 form a disordered region; it reads VKHEEEQKQTPEKEIKLENESLPNLSG. Glycyl lysine isopeptide (Lys-Gly) (interchain with G-Cter in SUMO) cross-links involve residues K201 and K215. S225 is modified (phosphoserine).

The protein resides in the cytoplasm. The protein localises to the nucleus. It is found in the nucleolus. Its function is as follows. May be involved in transcription regulation. This Saccharomyces cerevisiae (strain ATCC 204508 / S288c) (Baker's yeast) protein is Protein TRI1 (TRI1).